Consider the following 213-residue polypeptide: Outer-membrane lipoprotein carrier protein (213 aa).

The first 18 residues, 1–18, serve as a signal peptide directing secretion; the sequence is MKYFATICIAAYAGLAGA.

The protein belongs to the LolA family. Monomer.

The protein resides in the periplasm. In terms of biological role, participates in the translocation of lipoproteins from the inner membrane to the outer membrane. Only forms a complex with a lipoprotein if the residue after the N-terminal Cys is not an aspartate (The Asp acts as a targeting signal to indicate that the lipoprotein should stay in the inner membrane). The polypeptide is Outer-membrane lipoprotein carrier protein (Albidiferax ferrireducens (strain ATCC BAA-621 / DSM 15236 / T118) (Rhodoferax ferrireducens)).